A 125-amino-acid chain; its full sequence is Large ribosomal subunit protein uL22c (125 aa).

The protein belongs to the universal ribosomal protein uL22 family. Part of the 50S ribosomal subunit.

The protein localises to the plastid. The protein resides in the chloroplast. This protein binds specifically to 23S rRNA. Its function is as follows. The globular domain of the protein is located near the polypeptide exit tunnel on the outside of the subunit, while an extended beta-hairpin is found that lines the wall of the exit tunnel in the center of the 70S ribosome. The protein is Large ribosomal subunit protein uL22c (rpl22) of Nuphar advena (Common spatterdock).